The sequence spans 613 residues: Pentatricopeptide repeat-containing protein At2g02750 (613 aa).

15 PPR repeats span residues 30–64, 65–99, 101–126, 128–162, 163–193, 194–228, 230–264, 265–295, 297–331, 332–366, 367–401, 402–432, 435–469, 470–500, and 506–539; these read NKFT…GFFV, DVFT…GIAS, NAAV…ARVS, SGMN…GFEM, EVYV…VPHK, SVVT…SSEE, NDVT…EFQF, ETMV…LKDT, NLIS…GLKP, DSAT…VMVP, SLKC…AAER, DIFV…FEPK, DPVF…KVEP, SLAT…MQEE, and STEH…PSSS. The type E motif; degenerate stretch occupies residues 540 to 613; the sequence is VYSSLLGSCR…VKLPGLSLSG (74 aa).

Belongs to the PPR family. PCMP-E subfamily.

The protein is Pentatricopeptide repeat-containing protein At2g02750 (PCMP-E22) of Arabidopsis thaliana (Mouse-ear cress).